The chain runs to 264 residues: Octanoyltransferase (264 aa).

The BPL/LPL catalytic domain maps to 74–262 (GTASELVWLV…AFESVFGPRQ (189 aa)). Residues 113–120 (RGGEYTYH), 193–195 (AIG), and 206–208 (GIA) each bind substrate. Residue Cys224 is the Acyl-thioester intermediate of the active site.

Belongs to the LipB family.

It localises to the cytoplasm. The enzyme catalyses octanoyl-[ACP] + L-lysyl-[protein] = N(6)-octanoyl-L-lysyl-[protein] + holo-[ACP] + H(+). The protein operates within protein modification; protein lipoylation via endogenous pathway; protein N(6)-(lipoyl)lysine from octanoyl-[acyl-carrier-protein]: step 1/2. Functionally, catalyzes the transfer of endogenously produced octanoic acid from octanoyl-acyl-carrier-protein onto the lipoyl domains of lipoate-dependent enzymes. Lipoyl-ACP can also act as a substrate although octanoyl-ACP is likely to be the physiological substrate. This Brucella melitensis biotype 1 (strain ATCC 23456 / CCUG 17765 / NCTC 10094 / 16M) protein is Octanoyltransferase.